The following is a 595-amino-acid chain: DNA primase (595 aa).

The CHC2-type zinc finger occupies 38–62; it reads CPFHQEKTPSFTVSNSKRFFYCFGC. The Toprim domain maps to 250-332; it reads NHSILVEGYF…EKKISFIRLP (83 aa). Mg(2+) is bound by residues Glu-256, Asp-300, and Asp-302.

It belongs to the DnaG primase family. As to quaternary structure, monomer. Interacts with DnaB. It depends on Zn(2+) as a cofactor. Mg(2+) is required as a cofactor.

The catalysed reaction is ssDNA + n NTP = ssDNA/pppN(pN)n-1 hybrid + (n-1) diphosphate.. Functionally, RNA polymerase that catalyzes the synthesis of short RNA molecules used as primers for DNA polymerase during DNA replication. This Rickettsia conorii (strain ATCC VR-613 / Malish 7) protein is DNA primase.